The primary structure comprises 410 residues: NADH-quinone oxidoreductase subunit H (410 aa).

The next 9 helical transmembrane spans lie at 16 to 36 (LILAKSLGVFVFLLLTVLAAI), 84 to 104 (WIYLAAPVISVIPAFMAFAVI), 124 to 144 (LPVAVLYILAVTSIGVYGIVL), 165 to 185 (VISYEIAMALSFVAVFIYAGT), 198 to 218 (VWFIFLLLPSFLVYLTSMVGE), 260 to 280 (VSALATTLFLGGWHAPWPISI), 288 to 308 (WWPLLWFTAKVWLFLFFFMWL), 320 to 340 (FMRLGWKLLIPVSLAWIAIVA), and 353 to 373 (WVTALIGVAGVAAILASLLAW). Residues 384–410 (SHSPPAQSSDHGAFPVPPLPVKEPADA) form a disordered region.

Belongs to the complex I subunit 1 family. NDH-1 is composed of 14 different subunits. Subunits NuoA, H, J, K, L, M, N constitute the membrane sector of the complex.

The protein localises to the cell membrane. The catalysed reaction is a quinone + NADH + 5 H(+)(in) = a quinol + NAD(+) + 4 H(+)(out). Its function is as follows. NDH-1 shuttles electrons from NADH, via FMN and iron-sulfur (Fe-S) centers, to quinones in the respiratory chain. The immediate electron acceptor for the enzyme in this species is believed to be menaquinone. Couples the redox reaction to proton translocation (for every two electrons transferred, four hydrogen ions are translocated across the cytoplasmic membrane), and thus conserves the redox energy in a proton gradient. The sequence is that of NADH-quinone oxidoreductase subunit H from Mycolicibacterium gilvum (strain PYR-GCK) (Mycobacterium gilvum (strain PYR-GCK)).